A 154-amino-acid chain; its full sequence is 6,7-dimethyl-8-ribityllumazine synthase (154 aa).

5-amino-6-(D-ribitylamino)uracil is bound by residues Phe-15, 47–49, and 71–73; these read TFD and AVI. Residue 76 to 77 coordinates (2S)-2-hydroxy-3-oxobutyl phosphate; that stretch reads ET. His-79 functions as the Proton donor in the catalytic mechanism. Leu-104 lines the 5-amino-6-(D-ribitylamino)uracil pocket. Arg-119 serves as a coordination point for (2S)-2-hydroxy-3-oxobutyl phosphate.

The protein belongs to the DMRL synthase family.

It carries out the reaction (2S)-2-hydroxy-3-oxobutyl phosphate + 5-amino-6-(D-ribitylamino)uracil = 6,7-dimethyl-8-(1-D-ribityl)lumazine + phosphate + 2 H2O + H(+). The protein operates within cofactor biosynthesis; riboflavin biosynthesis; riboflavin from 2-hydroxy-3-oxobutyl phosphate and 5-amino-6-(D-ribitylamino)uracil: step 1/2. Functionally, catalyzes the formation of 6,7-dimethyl-8-ribityllumazine by condensation of 5-amino-6-(D-ribitylamino)uracil with 3,4-dihydroxy-2-butanone 4-phosphate. This is the penultimate step in the biosynthesis of riboflavin. This is 6,7-dimethyl-8-ribityllumazine synthase from Saccharolobus islandicus (strain M.16.27) (Sulfolobus islandicus).